Reading from the N-terminus, the 210-residue chain is MARRSQGTKLHLAVLCLVVSCHAIGLSDLMERASQRSDKLHSLSTSLTKDLDSHFPPMGRVMMPRPSMCHTSSLQTPKDKEQALKVSENELISLARSLLLAWNDPLLLLSSEAPTLPHPSNGDISSKIRELQDYSKSLGDGLDIMVNKMGPSSQYISSIPFKGGDLGNDKTSRLINFHFLMSCFRRDSHKIDSFLKVLRCRATKMRPEAC.

Residues 1–23 form the signal peptide; it reads MARRSQGTKLHLAVLCLVVSCHA. Disulfide bonds link Cys-69–Cys-183 and Cys-200–Cys-210.

The protein belongs to the somatotropin/prolactin family.

Its subcellular location is the secreted. The chain is Prolactin (prl) from Oncorhynchus mykiss (Rainbow trout).